The sequence spans 113 residues: Probable leucocin-A immunity protein (113 aa).

The protein belongs to the immunity protein EntA family.

Imparts immunity to leucocin-A to naturally sensitive host strains. This Leuconostoc gelidum protein is Probable leucocin-A immunity protein.